A 361-amino-acid chain; its full sequence is Holliday junction branch migration complex subunit RuvB (361 aa).

2 stretches are compositionally biased toward basic and acidic residues: residues 1 to 13 (MSDV…KLPE) and 33 to 43 (QGEHDIERSLR). The tract at residues 1–43 (MSDVERTEFKLPEGMDLSSPPQRNQDVDAAEQQGEHDIERSLR) is disordered. The segment at 2-203 (SDVERTEFKL…FGFTAQMEYY (202 aa)) is large ATPase domain (RuvB-L). Residues leucine 42, arginine 43, glycine 84, lysine 87, threonine 88, threonine 89, 150 to 152 (EDF), arginine 193, tyrosine 203, and arginine 240 each bind ATP. Position 88 (threonine 88) interacts with Mg(2+). Residues 204-274 (DTEDLTRVIS…AAQAALRVFD (71 aa)) are small ATPAse domain (RuvB-S). A head domain (RuvB-H) region spans residues 277-361 (ERGLDRLDRA…PEGAIGGTLF (85 aa)). DNA-binding residues include arginine 332 and arginine 337.

Belongs to the RuvB family. Homohexamer. Forms an RuvA(8)-RuvB(12)-Holliday junction (HJ) complex. HJ DNA is sandwiched between 2 RuvA tetramers; dsDNA enters through RuvA and exits via RuvB. An RuvB hexamer assembles on each DNA strand where it exits the tetramer. Each RuvB hexamer is contacted by two RuvA subunits (via domain III) on 2 adjacent RuvB subunits; this complex drives branch migration. In the full resolvosome a probable DNA-RuvA(4)-RuvB(12)-RuvC(2) complex forms which resolves the HJ.

It localises to the cytoplasm. It catalyses the reaction ATP + H2O = ADP + phosphate + H(+). Functionally, the RuvA-RuvB-RuvC complex processes Holliday junction (HJ) DNA during genetic recombination and DNA repair, while the RuvA-RuvB complex plays an important role in the rescue of blocked DNA replication forks via replication fork reversal (RFR). RuvA specifically binds to HJ cruciform DNA, conferring on it an open structure. The RuvB hexamer acts as an ATP-dependent pump, pulling dsDNA into and through the RuvAB complex. RuvB forms 2 homohexamers on either side of HJ DNA bound by 1 or 2 RuvA tetramers; 4 subunits per hexamer contact DNA at a time. Coordinated motions by a converter formed by DNA-disengaged RuvB subunits stimulates ATP hydrolysis and nucleotide exchange. Immobilization of the converter enables RuvB to convert the ATP-contained energy into a lever motion, pulling 2 nucleotides of DNA out of the RuvA tetramer per ATP hydrolyzed, thus driving DNA branch migration. The RuvB motors rotate together with the DNA substrate, which together with the progressing nucleotide cycle form the mechanistic basis for DNA recombination by continuous HJ branch migration. Branch migration allows RuvC to scan DNA until it finds its consensus sequence, where it cleaves and resolves cruciform DNA. In Corynebacterium aurimucosum (strain ATCC 700975 / DSM 44827 / CIP 107346 / CN-1) (Corynebacterium nigricans), this protein is Holliday junction branch migration complex subunit RuvB.